We begin with the raw amino-acid sequence, 344 residues long: Cytochrome c biogenesis protein CcsA (344 aa).

The next 8 membrane-spanning stretches (helical) occupy residues 21 to 41 (NVAF…AAFP), 45 to 65 (LLSE…AALL), 80 to 100 (LYES…LALH), 106 to 126 (WVGV…ALAL), 151 to 171 (VMLL…AFLI), 252 to 272 (LIGL…VWAN), 287 to 307 (WALI…TKGW), and 313 to 333 (ALLA…VNFL).

Belongs to the CcmF/CycK/Ccl1/NrfE/CcsA family. In terms of assembly, may interact with ccs1.

Its subcellular location is the cellular thylakoid membrane. Required during biogenesis of c-type cytochromes (cytochrome c6 and cytochrome f) at the step of heme attachment. The chain is Cytochrome c biogenesis protein CcsA from Synechococcus sp. (strain JA-3-3Ab) (Cyanobacteria bacterium Yellowstone A-Prime).